The chain runs to 305 residues: Cytochrome c biogenesis protein CcsA (305 aa).

8 consecutive transmembrane segments (helical) span residues 4–24 (VLGLGLFAFALLLLALPLAFW), 32–52 (SGLVTLLIATANLALTAQLVL), 58–78 (GHFPISNLYESLCFLAWACTL), 91–111 (IVAAAATPMGLGCIAFASFAL), 136–156 (VIMVSYAALLVGSLLSVAVLV), 212–232 (TITVGFLLLTVGIISGAVWAN), 246–263 (TWALICWLVYAAYLHTRL), and 275–295 (VASAGLVVIGVCYIGVNLLGI).

This sequence belongs to the CcmF/CycK/Ccl1/NrfE/CcsA family. May interact with ccs1.

It is found in the cellular thylakoid membrane. Required during biogenesis of c-type cytochromes (cytochrome c6 and cytochrome f) at the step of heme attachment. This Synechococcus sp. (strain CC9311) protein is Cytochrome c biogenesis protein CcsA.